The primary structure comprises 338 residues: Fructose-1,6-bisphosphatase class 1 1 (338 aa).

Residues Glu91, Asp113, Leu115, and Asp116 each contribute to the Mg(2+) site. Residues 116–119 (DGSS), Asn208, and Lys274 each bind substrate. Glu280 contributes to the Mg(2+) binding site.

The protein belongs to the FBPase class 1 family. In terms of assembly, homotetramer. Requires Mg(2+) as cofactor.

It localises to the cytoplasm. It carries out the reaction beta-D-fructose 1,6-bisphosphate + H2O = beta-D-fructose 6-phosphate + phosphate. It participates in carbohydrate biosynthesis; gluconeogenesis. This is Fructose-1,6-bisphosphatase class 1 1 from Cupriavidus necator (strain ATCC 17699 / DSM 428 / KCTC 22496 / NCIMB 10442 / H16 / Stanier 337) (Ralstonia eutropha).